Consider the following 227-residue polypeptide: UPF0758 protein Psyc_1834 (227 aa).

Positions 102–224 (GLGRSQMVKD…TLSYAENCLA (123 aa)) constitute an MPN domain. Residues H173, H175, and D186 each contribute to the Zn(2+) site. The JAMM motif signature appears at 173 to 186 (HNHPHTDATPSTAD).

This sequence belongs to the UPF0758 family.

This chain is UPF0758 protein Psyc_1834, found in Psychrobacter arcticus (strain DSM 17307 / VKM B-2377 / 273-4).